A 1236-amino-acid polypeptide reads, in one-letter code: Calcium-activated potassium channel subunit alpha-1 (1236 aa).

Gly residues predominate over residues 1–21; it reads MANGGGGGGGSSGGGGGGGGS. The tract at residues 1-61 is disordered; it reads MANGGGGGGG…SSSSSSSSSV (61 aa). At 1–86 the chain is on the extracellular side; it reads MANGGGGGGG…VPCDSRGQRM (86 aa). A compositionally biased stretch (low complexity) spans 39-60; it reads SSSSSSSSSSSSSSSSSSSSSS. Residues 87–107 form a helical membrane-spanning segment; that stretch reads WWAFLASSMVTFFGGLFIILL. The Cytoplasmic segment spans residues 108–178; the sequence is WRTLKYLWTV…MISAQTLTGR (71 aa). Residues Cys118, Cys119, and Cys121 are each lipidated (S-palmitoyl cysteine). A helical transmembrane segment spans residues 179 to 199; the sequence is VLVVLVFALSIGALVIYFIDS. Topologically, residues 200 to 214 are extracellular; it reads SNPIESCQNFYKDFT. The chain crosses the membrane as a helical span at residues 215–235; the sequence is LQIDMAFNVFFLLYFGLRFIA. Residues 236–239 are Cytoplasmic-facing; the sequence is ANDK. A helical membrane pass occupies residues 240–260; sequence LWFWLEVNSVVDFFTVPPVFV. Topologically, residues 261–264 are extracellular; it reads SVYL. The chain crosses the membrane as a helical span at residues 265 to 285; it reads NRSWLGLRFLRALRLIQFSEI. Topologically, residues 286-300 are cytoplasmic; the sequence is LQFLNILKTSNSIKL. The helical transmembrane segment at 301–321 threads the bilayer; sequence VNLLSIFISTWLTAAGFIHLV. Over 322–335 the chain is Extracellular; the sequence is ENSGDPWENFQNNQ. Positions 336–358 form an intramembrane region, pore-forming; the sequence is ALTYWECVYLLMVTMSTVGYGDV. Residues 352 to 355 carry the Selectivity for potassium motif; sequence TVGY. The Extracellular portion of the chain corresponds to 359-367; it reads YAKTTLGRL. The chain crosses the membrane as a helical span at residues 368 to 388; it reads FMVFFILGGLAMFASYVPEII. The Cytoplasmic portion of the chain corresponds to 389–1236; it reads ELIGNRKKYG…KQKYVQEERL (848 aa). Residues 407–549 form the RCK N-terminal 1 domain; the sequence is RKHIVVCGHI…WNWKEGDDAI (143 aa). Residues Glu439, Gln462, and Glu464 each contribute to the Mg(2+) site. The interval 556 to 576 is segment S7; it reads LGFIAQSCLAQGLSTMLANLF. The interval 613-633 is segment S8; that stretch reads LSFPTVCELCFVKLKLLMIAI. A heme-binding motif region spans residues 677–681; it reads CKACH. Residues 757 to 787 form a disordered region; the sequence is EDEQPSTLSPKKKQRNGGMRNSPNTSPKLMR. At Thr763 the chain carries Phosphothreonine. Residues Ser765, Ser778, and Ser782 each carry the phosphoserine modification. Positions 837-857 are segment S9; it reads VLSGHVVVCIFGDVSSALIGL. The region spanning 839-983 is the RCK N-terminal 2 domain; sequence SGHVVVCIFG…MDRSSPDNSP (145 aa). At Thr970 the chain carries Phosphothreonine. A phosphoserine mark is found at Ser978 and Ser982. The Calcium bowl signature appears at 1003–1025; the sequence is TELVNDTNVQFLDQDDDDDPDTE. Ca(2+)-binding residues include Gln1012, Asp1015, Asp1018, and Asp1020. Residues 1032-1052 are segment S10; it reads FACGTAFAVSVLDSLMSATYF. The segment covering 1186–1211 has biased composition (low complexity); it reads RASLSHSSHSSQSSSKKSSSVHSIPS. Residues 1186 to 1236 are disordered; sequence RASLSHSSHSSQSSSKKSSSVHSIPSTANRQNRPKSRESRDKQKYVQEERL. The segment covering 1220-1236 has biased composition (basic and acidic residues); it reads KSRESRDKQKYVQEERL. Residues Ser1221 and Ser1224 each carry the phosphoserine modification.

The protein belongs to the potassium channel family. Calcium-activated (TC 1.A.1.3) subfamily. KCa1.1/KCNMA1 sub-subfamily. As to quaternary structure, homotetramer; which constitutes the calcium-activated potassium channel. Interacts with RAB11B. Interacts with beta subunits KCNMB1, KCNMB2, KCNMB3 and KCNMB4. Interacts with gamma subunits LRRC26, LRRC38, LRRC52 and LRRC55. Beta and gamma subunits are accessory, and modulate its activity. Phosphorylated. Phosphorylation by kinases such as PKA and/or PKG. In smooth muscles, phosphorylation affects its activity. In terms of processing, palmitoylation by ZDHHC22 and ZDHHC23 within the intracellular linker between the S0 and S1 transmembrane domains regulates localization to the plasma membrane. Depalmitoylated by LYPLA1 and LYPLAL1, leading to retard exit from the trans-Golgi network. In terms of tissue distribution, widely expressed. Except in myocytes, it is almost ubiquitously expressed.

The protein resides in the cell membrane. It catalyses the reaction K(+)(in) = K(+)(out). Ethanol and carbon monoxide-bound heme increase channel activation. Heme inhibits channel activation. Functionally, potassium channel activated by both membrane depolarization or increase in cytosolic Ca(2+) that mediates export of K(+). It is also activated by the concentration of cytosolic Mg(2+). Its activation dampens the excitatory events that elevate the cytosolic Ca(2+) concentration and/or depolarize the cell membrane. It therefore contributes to repolarization of the membrane potential. Plays a key role in controlling excitability in a number of systems, such as regulation of the contraction of smooth muscle, the tuning of hair cells in the cochlea, regulation of transmitter release, and innate immunity. In smooth muscles, its activation by high level of Ca(2+), caused by ryanodine receptors in the sarcoplasmic reticulum, regulates the membrane potential. In cochlea cells, its number and kinetic properties partly determine the characteristic frequency of each hair cell and thereby helps to establish a tonotopic map. Kinetics of KCNMA1 channels are determined by alternative splicing, phosphorylation status and its combination with modulating beta subunits. Highly sensitive to both iberiotoxin (IbTx) and charybdotoxin (CTX). Possibly induces sleep when activated by melatonin and through melatonin receptor MTNR1A-dependent dissociation of G-beta and G-gamma subunits, leading to increased sensitivity to Ca(2+) and reduced synaptic transmission. Its function is as follows. Potassium channel activated by both membrane depolarization or increase in cytosolic Ca(2+) that mediates export of K(+). This Homo sapiens (Human) protein is Calcium-activated potassium channel subunit alpha-1.